The primary structure comprises 108 residues: UPF0060 membrane protein Nwi_1459 (108 aa).

4 helical membrane-spanning segments follow: residues 5-25 (AAYV…WAWL), 31-51 (VWWL…LTLV), 61-81 (AAYG…VEGI), and 88-108 (LAGA…PHEI).

Belongs to the UPF0060 family.

It is found in the cell inner membrane. This Nitrobacter winogradskyi (strain ATCC 25391 / DSM 10237 / CIP 104748 / NCIMB 11846 / Nb-255) protein is UPF0060 membrane protein Nwi_1459.